A 302-amino-acid chain; its full sequence is Probable alpha-L-glutamate ligase (302 aa).

The ATP-grasp domain maps to 104–287 (MQLLSREGVG…VAGMIIEFIE (184 aa)). ATP-binding positions include lysine 141, 178-179 (EF), aspartate 187, and 211-213 (RSN). Positions 248, 260, and 262 each coordinate Mg(2+). Mn(2+) is bound by residues aspartate 248, glutamate 260, and asparagine 262.

This sequence belongs to the RimK family. Requires Mg(2+) as cofactor. Mn(2+) serves as cofactor.

The polypeptide is Probable alpha-L-glutamate ligase (Halorhodospira halophila (strain DSM 244 / SL1) (Ectothiorhodospira halophila (strain DSM 244 / SL1))).